The sequence spans 691 residues: Amino-acid acetyltransferase, mitochondrial (691 aa).

Positions 1-27 are enriched in polar residues; sequence MSSTSLAWPRTAKSSLLQSADFSSTSK. Disordered regions lie at residues 1–29 and 65–95; these read MSSTSLAWPRTAKSSLLQSADFSSTSKGY and RLKAQHSPKPQVKEPEKESKDDAPQPLPSGV. The span at 75-87 shows a compositional bias: basic and acidic residues; sequence QVKEPEKESKDDA. In terms of domain architecture, N-acetyltransferase spans 512–681; it reads NRPRMSLDDP…YEAVCRSIQP (170 aa).

This sequence belongs to the acetyltransferase family.

It is found in the mitochondrion. The enzyme catalyses L-glutamate + acetyl-CoA = N-acetyl-L-glutamate + CoA + H(+). Its pathway is amino-acid biosynthesis; L-arginine biosynthesis; N(2)-acetyl-L-ornithine from L-glutamate: step 1/4. Its function is as follows. N-acetylglutamate synthase involved in arginine biosynthesis. This chain is Amino-acid acetyltransferase, mitochondrial (arg2), found in Aspergillus terreus (strain NIH 2624 / FGSC A1156).